A 166-amino-acid polypeptide reads, in one-letter code: Ribosome maturation factor RimM (166 aa).

The region spanning 94–165 is the PRC barrel domain; that stretch reads EGEYYLGKLI…TIELKVLDLL (72 aa).

The protein belongs to the RimM family. In terms of assembly, binds ribosomal protein uS19.

The protein resides in the cytoplasm. Its function is as follows. An accessory protein needed during the final step in the assembly of 30S ribosomal subunit, possibly for assembly of the head region. Essential for efficient processing of 16S rRNA. May be needed both before and after RbfA during the maturation of 16S rRNA. It has affinity for free ribosomal 30S subunits but not for 70S ribosomes. The chain is Ribosome maturation factor RimM from Borreliella afzelii (strain PKo) (Borrelia afzelii).